We begin with the raw amino-acid sequence, 273 residues long: Undecaprenyl-diphosphatase (273 aa).

The next 8 membrane-spanning stretches (helical) occupy residues 4–24, 45–65, 84–104, 112–132, 149–169, 187–207, 219–239, and 251–271; these read IELL…WLPI, FMSM…VVLF, TFTL…MIPF, FFNP…FIII, ITYQ…IPGT, YVAA…ASLL, AEIV…IIVI, and FKVF…YFLL.

Belongs to the UppP family.

Its subcellular location is the cell membrane. The enzyme catalyses di-trans,octa-cis-undecaprenyl diphosphate + H2O = di-trans,octa-cis-undecaprenyl phosphate + phosphate + H(+). Its function is as follows. Catalyzes the dephosphorylation of undecaprenyl diphosphate (UPP). Confers resistance to bacitracin. This Lachnoclostridium phytofermentans (strain ATCC 700394 / DSM 18823 / ISDg) (Clostridium phytofermentans) protein is Undecaprenyl-diphosphatase.